The following is a 501-amino-acid chain: L-arabinose isomerase (501 aa).

Residues Glu306, Glu333, His350, and His450 each contribute to the Mn(2+) site.

The protein belongs to the arabinose isomerase family. Homohexamer. Requires Mn(2+) as cofactor.

It catalyses the reaction beta-L-arabinopyranose = L-ribulose. Its pathway is carbohydrate degradation; L-arabinose degradation via L-ribulose; D-xylulose 5-phosphate from L-arabinose (bacterial route): step 1/3. Functionally, catalyzes the conversion of L-arabinose to L-ribulose. In Erwinia tasmaniensis (strain DSM 17950 / CFBP 7177 / CIP 109463 / NCPPB 4357 / Et1/99), this protein is L-arabinose isomerase.